A 310-amino-acid polypeptide reads, in one-letter code: Vomeronasal type-1 receptor 53 (310 aa).

Over 1–20 (MNKANLLHTDINLKITLFSE) the chain is Extracellular. A helical membrane pass occupies residues 21 to 41 (VSVGISANSILIFAHLCMLLG). The Cytoplasmic segment spans residues 42-50 (ENRPKPIDL). A helical transmembrane segment spans residues 51-71 (YIAFFSLTQLMLLITMGLIAV). The Extracellular portion of the chain corresponds to 72–93 (DMFMPWGRWDSTTCQSLIYLHR). Residues Cys-85 and Cys-172 are joined by a disulfide bond. The helical transmembrane segment at 94–114 (LLRGLTLSATCLLNVLWTITL) threads the bilayer. Topologically, residues 115-134 (SPRSSCLTKFKHKSLQHISC) are cytoplasmic. Residues 135–155 (AFLFLCVLYMSFNSHLFISII) form a helical membrane-spanning segment. Topologically, residues 156 to 183 (AYPNLTLENFMYVTQSCSLIPLSYFRKS) are extracellular. An N-linked (GlcNAc...) asparagine glycan is attached at Asn-159. A helical transmembrane segment spans residues 184 to 204 (MFSIPMAIREALLIGLMALSG). At 205 to 238 (GYMVAHLWRHKKQAQHLHRTSLSSKASPEQRATR) the chain is on the cytoplasmic side. The chain crosses the membrane as a helical span at residues 239–259 (TIMLLMSFFVVLYILDLVIFH). Residues 260–268 (SRMKFKDGS) lie on the Extracellular side of the membrane. The helical transmembrane segment at 269-289 (ILYGVQIIVSHSYATVSPFVF) threads the bilayer. Over 290 to 310 (ICTEKRITNFLRSMCGRIVNI) the chain is Cytoplasmic.

It belongs to the G-protein coupled receptor 1 family.

It is found in the cell membrane. In terms of biological role, putative pheromone receptor implicated in the regulation of social and reproductive behavior. The chain is Vomeronasal type-1 receptor 53 (Vmn1r53) from Mus musculus (Mouse).